The following is a 1685-amino-acid chain: PHD and RING finger domain-containing protein 1 (1685 aa).

Residues 1–82 (MDDDNLDELV…GSEDSEDGIE (82 aa)) are disordered. The span at 41 to 81 (DSEDDTGSEQDDDTDGEETEGLSEEEDPEDRSGSEDSEDGI) shows a compositional bias: acidic residues. An RING-type; degenerate zinc finger spans residues 109-150 (CPICLNAFRDQAVGTPETCAHYFCLDCIIEWSRNANSCPVDR). The PHD-type zinc-finger motif lies at 188 to 238 (PTFCEVCGRSDREDRLLLCDGCDAGYHMECLDPPLQEVPVDEWFCPECAVP). 5 disordered regions span residues 333–390 (PLTP…KLKN), 449–483 (DSNG…VARP), 537–590 (SAKR…GLSC), 606–777 (TPVR…GSSF), and 809–860 (KVQR…LLPS). The residue at position 335 (T335) is a Phosphothreonine. Composition is skewed to basic residues over residues 339–364 (PAKR…RSSV) and 372–387 (RAKK…KGRK). Phosphoserine is present on residues S450 and S460. Polar residues-rich tracts occupy residues 606–625 (TPVR…GNLS) and 637–662 (SPRL…NFPS). Positions 671-682 (QKTDPRRPDFSK) are enriched in basic and acidic residues. Polar residues-rich tracts occupy residues 694 to 709 (SNST…QTVE) and 737 to 751 (SSRG…TSGS). Residues S817, S848, S849, S867, S870, S922, S948, S984, and S1002 each carry the phosphoserine modification. The segment covering 835 to 860 (PFDPTGSDSSPPSSSPESLGSGLLPS) has biased composition (low complexity). Disordered stretches follow at residues 892 to 1229 (GTEM…VSEV), 1290 to 1355 (QLDD…APSD), and 1369 to 1390 (TTLS…SGRG). Residues 922 to 934 (SDLEQEGLGEIEP) are compositionally biased toward acidic residues. Low complexity predominate over residues 1001-1010 (SSRSRSTSSS). Basic residues-rich tracts occupy residues 1011–1031 (RSRK…RTRS) and 1054–1064 (KRHRAKTKSRR). Residues 1065–1075 (SSSDRASSQDR) are compositionally biased toward basic and acidic residues. Basic residues-rich tracts occupy residues 1089–1102 (GPWG…KSRS) and 1117–1129 (SRRR…GSRS). Basic and acidic residues-rich tracts occupy residues 1130-1143 (RGRD…LERD) and 1151-1165 (RSRE…MTRS). Phosphoserine occurs at positions 1135 and 1139. The span at 1181-1191 (RTRRPHSREKH) shows a compositional bias: basic residues. Over residues 1192-1201 (PHSPEKKGAV) the composition is skewed to basic and acidic residues. At S1205 the chain carries Phosphoserine. Residues 1292–1305 (DDMSSPPSPESTDS) show a composition bias toward low complexity. Phosphoserine is present on residues S1372 and S1383. T1416 bears the Phosphothreonine mark. 3 disordered regions span residues 1421 to 1448 (EAEA…EGDW), 1466 to 1501 (LPPP…VGTL), and 1569 to 1591 (LAVP…AEKT). Residues 1577–1591 (SEERTATPKTAAEKT) show a composition bias toward basic and acidic residues. A coiled-coil region spans residues 1589-1615 (EKTKKEEYMKKLHMQERAVEEVKLAIK).

As to quaternary structure, interacts with POLR2A (via the C-terminal domain).

The sequence is that of PHD and RING finger domain-containing protein 1 from Rattus norvegicus (Rat).